Here is a 1308-residue protein sequence, read N- to C-terminus: Misshapen-like kinase 1 (1308 aa).

A Protein kinase domain is found at 25-289 (FELVEVVGNG…TEQLLKFPFI (265 aa)). ATP-binding positions include 31 to 39 (VGNGTYGQV) and K54. The Proton acceptor role is filled by D153. Disordered stretches follow at residues 299-347 (RIQL…NVPG), 363-383 (KSNS…QRDP), and 395-862 (QRRI…GGTM). Residues 317-333 (EETEYEYSGSEEEDDSH) are compositionally biased toward acidic residues. A phosphoserine mark is found at S324 and S326. Residues 371-380 (QQQQLQQQQQ) are compositionally biased toward low complexity. A compositionally biased stretch (basic and acidic residues) spans 396–466 (RRIEEQKEER…EEQRQSERLQ (71 aa)). Residues 479–497 (LQQQQQQQQLQKQQQQQQQ) show a composition bias toward low complexity. 2 positions are modified to omega-N-methylarginine: R503 and R511. Residues 520–530 (AWAREVEERAR) show a composition bias toward basic and acidic residues. Residues 600–610 (RSQSLQDQPTR) are compositionally biased toward polar residues. A compositionally biased stretch (low complexity) spans 623–633 (PAAVPTPTATP). S644 bears the Phosphoserine mark. Positions 673-685 (QRTSSIATALNTS) are enriched in polar residues. 6 positions are modified to phosphoserine: D702, S720, S729, S745, S746, and S750. Residues 702–714 (DLRRSDPGWERSD) show a composition bias toward basic and acidic residues. The span at 773–797 (AIGEDFVLLKERTLDEAPKPPKKAM) shows a compositional bias: basic and acidic residues. A compositionally biased stretch (acidic residues) spans 804-820 (EEVESSEEEEEEGDGEP). The segment at 842–1308 (MVVHDVEEIS…TLNRNCIMNW (467 aa)) is mediates interaction with RAP2A. The residue at position 867 (T867) is a Phosphothreonine. A disordered region spans residues 881–918 (GYTNLPDVVQPSHSPTENSKGQSPPTKDGGSDYQSRGL). Residues 891–905 (PSHSPTENSKGQSPP) show a composition bias toward polar residues. Residues 995–1282 (NSEILCAALW…KFLCERNDKV (288 aa)) form the CNH domain.

It belongs to the protein kinase superfamily. STE Ser/Thr protein kinase family. STE20 subfamily. As to quaternary structure, interacts with RAP2A and TANC1. Interacts with NCK1. The cofactor is Mg(2+). Post-translationally, autophosphorylated. As to expression, appears to be ubiquitous, expressed in all tissue types examined. Highly expressed in the brain, moderately expressed in kidney and spleen, low levels present in heart and skeletal muscle. Isoform 2 is more abundant in the brain than isoform 1.

It localises to the cytoplasm. Its subcellular location is the postsynaptic density. The protein localises to the cell projection. It is found in the axon. The protein resides in the dendrite. It catalyses the reaction L-seryl-[protein] + ATP = O-phospho-L-seryl-[protein] + ADP + H(+). It carries out the reaction L-threonyl-[protein] + ATP = O-phospho-L-threonyl-[protein] + ADP + H(+). Its function is as follows. Serine/threonine kinase which acts as a negative regulator of Ras-related Rap2-mediated signal transduction to control neuronal structure and AMPA receptor trafficking. Required for normal synaptic density, dendrite complexity, as well as surface AMPA receptor expression in hippocampal neurons. Can activate the JNK and MAPK14/p38 pathways and mediates stimulation of the stress-activated protein kinase MAPK14/p38 MAPK downstream of the Raf/ERK pathway. Phosphorylates TANC1 upon stimulation by RAP2A, MBP and SMAD1. Has an essential function in negative selection of thymocytes, perhaps by coupling NCK1 to activation of JNK1. Activator of the Hippo signaling pathway which plays a pivotal role in organ size control and tumor suppression by restricting proliferation and promoting apoptosis. MAP4Ks act in parallel to and are partially redundant with STK3/MST2 and STK4/MST2 in the phosphorylation and activation of LATS1/2, and establish MAP4Ks as components of the expanded Hippo pathway. In Mus musculus (Mouse), this protein is Misshapen-like kinase 1.